The chain runs to 221 residues: MFIQLLILSYAILLQLIATQVADKQLPNLTKQCEPTSQTIYDFHVPTLDGSEKSLAEYRGKVLLLVNVATYCAYTFQYNDFNPMLENNSNGTLKILAFPCNQFLLQEPAENHELLNGLKYVRPGNGWEPHGNMHIFGKVEVNGDDHHPLYKFLKEHCPQTVPIIGDRHQLMYNPIGTNDIIWNFEKFLIDKKGHPRYRFHPSAWVQGSVIAPFIDELEREI.

A signal peptide spans 1–19; that stretch reads MFIQLLILSYAILLQLIAT. The N-linked (GlcNAc...) asparagine glycan is linked to N28. Residue C72 is part of the active site. N-linked (GlcNAc...) asparagine glycosylation is found at N87 and N90.

This sequence belongs to the glutathione peroxidase family. In terms of assembly, homotetramer.

The protein resides in the secreted. The protein localises to the extracellular space. It carries out the reaction 2 glutathione + H2O2 = glutathione disulfide + 2 H2O. The polypeptide is Glutathione peroxidase (Dirofilaria immitis (Canine heartworm)).